The sequence spans 1442 residues: CD109 antigen (1442 aa).

A signal peptide spans 1–21 (MRSRRLLSAAHLLCLCAVALA). N67, N117, N246, N278, N370, and N421 each carry an N-linked (GlcNAc...) asparagine glycan. Positions 595–704 (DKSVTLMENS…TWIWLDAYMG (110 aa)) are bait region (approximate). The segment at residues 923 to 926 (CGEQ) is a cross-link (isoglutamyl cysteine thioester (Cys-Gln)). N1088 carries an N-linked (GlcNAc...) asparagine glycan. A lipid anchor (GPI-anchor amidated alanine) is attached at A1419. The propeptide at 1420-1442 (TDSLRRSSSLLVFCSVLLYFVQH) is removed in mature form.

The protein belongs to the protease inhibitor I39 (alpha-2-macroglobulin) family. Heterodimer; disulfide-linked. Interacts with TGFB1 and TGFBR1. Forms a heteromeric complex with TGFBR1, TGFBR2 and TGFBR3 in a ligand-independent manner. N-glycosylated. In terms of processing, 2 forms of 150 (p150) and 120 kDa (p120) exist due to proteolytic degradation from a 180 kDa form.

Its subcellular location is the cell membrane. In terms of biological role, modulates negatively TGFB1 signaling in keratinocytes. This is CD109 antigen (Cd109) from Mus musculus (Mouse).